The sequence spans 132 residues: NADH-quinone oxidoreductase subunit A 2 (132 aa).

3 helical membrane passes run 10-30, 66-86, and 93-113; these read WALLAYLFGALALCLLMLGLG, LVAMLFVIFGIEMPFLYLWAV, and WAGFVEATLFVSLLLVGLFYL.

Belongs to the complex I subunit 3 family. As to quaternary structure, NDH-1 is composed of 13 different subunits. Subunits NuoA, H, J, K, L, M, N constitute the membrane sector of the complex.

It is found in the cell inner membrane. It carries out the reaction a quinone + NADH + 5 H(+)(in) = a quinol + NAD(+) + 4 H(+)(out). Its function is as follows. NDH-1 shuttles electrons from NADH, via FMN and iron-sulfur (Fe-S) centers, to quinones in the respiratory chain. The immediate electron acceptor for the enzyme in this species is believed to be ubiquinone. Couples the redox reaction to proton translocation (for every two electrons transferred, four hydrogen ions are translocated across the cytoplasmic membrane), and thus conserves the redox energy in a proton gradient. The polypeptide is NADH-quinone oxidoreductase subunit A 2 (Pseudomonas aeruginosa (strain UCBPP-PA14)).